We begin with the raw amino-acid sequence, 246 residues long: Biosynthetic peptidoglycan transglycosylase (246 aa).

A helical transmembrane segment spans residues 27–47 (VVFCFFFAVFALLLIFRFVPI).

Belongs to the glycosyltransferase 51 family.

Its subcellular location is the cell inner membrane. The catalysed reaction is [GlcNAc-(1-&gt;4)-Mur2Ac(oyl-L-Ala-gamma-D-Glu-L-Lys-D-Ala-D-Ala)](n)-di-trans,octa-cis-undecaprenyl diphosphate + beta-D-GlcNAc-(1-&gt;4)-Mur2Ac(oyl-L-Ala-gamma-D-Glu-L-Lys-D-Ala-D-Ala)-di-trans,octa-cis-undecaprenyl diphosphate = [GlcNAc-(1-&gt;4)-Mur2Ac(oyl-L-Ala-gamma-D-Glu-L-Lys-D-Ala-D-Ala)](n+1)-di-trans,octa-cis-undecaprenyl diphosphate + di-trans,octa-cis-undecaprenyl diphosphate + H(+). Its pathway is cell wall biogenesis; peptidoglycan biosynthesis. Its function is as follows. Peptidoglycan polymerase that catalyzes glycan chain elongation from lipid-linked precursors. This Haemophilus influenzae (strain ATCC 51907 / DSM 11121 / KW20 / Rd) protein is Biosynthetic peptidoglycan transglycosylase.